The chain runs to 699 residues: uncharacterized protein (699 aa).

Disordered regions lie at residues 175-208 (PTLGVSEFPSKHGDHSDSKTYESPISNSQAASLS), 289-364 (PTAK…EEPD), and 539-603 (RAKE…KEYL). The span at 183-194 (PSKHGDHSDSKT) shows a compositional bias: basic and acidic residues. Positions 195–208 (YESPISNSQAASLS) are enriched in polar residues. A compositionally biased stretch (basic residues) spans 308–322 (SKHKKRPKRLSKFKQ). The segment covering 323 to 338 (AKLETKKSGNKDHATS) has biased composition (basic and acidic residues). Composition is skewed to polar residues over residues 339–360 (SEKLSLGNESIHSINETRSSSI) and 548–573 (HSNATCTIKNDDLSNTLNNRAANTKL). Residues 574–603 (NPKEEDKSTVESELKAPPKEKSSETSKEYL) are compositionally biased toward basic and acidic residues.

It localises to the cytoplasm. This is an uncharacterized protein from Schizosaccharomyces pombe (strain 972 / ATCC 24843) (Fission yeast).